Consider the following 143-residue polypeptide: uncharacterized protein (143 aa).

Residues 1–143 (MRSSRQKASI…WFSQTVKRKA (143 aa)) are disordered. 2 stretches are compositionally biased toward basic and acidic residues: residues 34–46 (ISAEKEEEEKHLD) and 61–76 (EYQKETKEKETDRKIV). Acidic residues-rich tracts occupy residues 77-93 (DDEEETKFETTLEPEEE) and 103-115 (YEEEDEDEEPDLA).

This is an uncharacterized protein from Bacillus subtilis (strain 168).